A 61-amino-acid chain; its full sequence is Small ribosomal subunit protein uS14 (61 aa).

Residues C24, C27, C40, and C43 each contribute to the Zn(2+) site.

The protein belongs to the universal ribosomal protein uS14 family. Zinc-binding uS14 subfamily. As to quaternary structure, part of the 30S ribosomal subunit. Contacts proteins S3 and S10. Zn(2+) is required as a cofactor.

Binds 16S rRNA, required for the assembly of 30S particles and may also be responsible for determining the conformation of the 16S rRNA at the A site. This chain is Small ribosomal subunit protein uS14, found in Malacoplasma penetrans (strain HF-2) (Mycoplasma penetrans).